We begin with the raw amino-acid sequence, 283 residues long: MKQYLELCRRIVDEGHWVENERTGKRCLTVINADLTYDVANNQFPLVTTRKSFWKAAVAELLGYIRGYDNAEDFRKLGTKTWDANANLNDAWLNNPYRKGDDDMGRVYGVQGRAWAKPDGGHIDQLRKIVDDLTRGVDDRGEILNFYNPGEFHMGCLRPCMYSHHFSLLGDTLYLNSTQRSCDVPLGLNFNMVQVYVFLAIMAQITGKKPGQAFHKIVNAHIYEDQLALMRDVQLKREPLQAPTFHINPEIKSLEDLETWVTLDDFWVEGYEHHDPIQYPFSV.

Residue Arg22 participates in dUMP binding. The active-site Nucleophile is Cys160. Residues 180–183 (RSCD), Asn191, and 221–223 (HIY) each bind dUMP. Asp183 provides a ligand contact to (6R)-5,10-methylene-5,6,7,8-tetrahydrofolate. A (6R)-5,10-methylene-5,6,7,8-tetrahydrofolate-binding site is contributed by Ser282.

This sequence belongs to the thymidylate synthase family. Bacterial-type ThyA subfamily. As to quaternary structure, homodimer.

It is found in the cytoplasm. The catalysed reaction is dUMP + (6R)-5,10-methylene-5,6,7,8-tetrahydrofolate = 7,8-dihydrofolate + dTMP. The protein operates within pyrimidine metabolism; dTTP biosynthesis. In terms of biological role, catalyzes the reductive methylation of 2'-deoxyuridine-5'-monophosphate (dUMP) to 2'-deoxythymidine-5'-monophosphate (dTMP) while utilizing 5,10-methylenetetrahydrofolate (mTHF) as the methyl donor and reductant in the reaction, yielding dihydrofolate (DHF) as a by-product. This enzymatic reaction provides an intracellular de novo source of dTMP, an essential precursor for DNA biosynthesis. The sequence is that of Thymidylate synthase from Vibrio vulnificus (strain YJ016).